A 502-amino-acid chain; its full sequence is MAPLKLNSKNLSQIAAAGGALVKIPTYQRGRAVKEGIVHIGVGGFHRAHLAVYIDQLMQKHGVTDYAICGVGLQPFDSAMRDALASQDHLYTLIERSAKGSFAHVIGSINSYLFAPDNREAVIAKMAHPDTKIVSLTITESGYYYNENTHELQSEHPDIQFDLDPANEKAPRTTFGFLYAGLTRRYQQGLKPFTVMSCDNMQKNGSITRHMLESFARLRNPEVAEWIAEEGAFPNAMVDRITPQTSENDKTALADTFGIVDSWPVVTEPFTQWVIEDQFSNGRPPFEKVGVQVVKDVHAVEQFEKHKLRLLNGSHSALGYPGQLAGFKYVHEVMENPLFRKFVWQMMQEEVKPLLPEIPGVNIDEYCNTLIERFTNPTIMDQLPRICLNASGKIPQFIMPSIAEAIWVTGPFRRLCFVAAAWFHYVKGVDDSGKPFEVVDPMREELQAKARAGGNDPFELLSIKSLFGDDLRSDERFLKEITTAMNDIARDGIMKTLPKYID.

NAD(+) is bound at residue 37 to 48 (IVHIGVGGFHRA).

It belongs to the mannitol dehydrogenase family. Monomer.

It carries out the reaction D-mannitol + NAD(+) = D-fructose + NADH + H(+). Catalyzes the NAD(H)-dependent interconversion of D-fructose and D-mannitol in the mannitol metabolic pathway. This chain is Mannitol 2-dehydrogenase, found in Neosartorya fischeri (strain ATCC 1020 / DSM 3700 / CBS 544.65 / FGSC A1164 / JCM 1740 / NRRL 181 / WB 181) (Aspergillus fischerianus).